A 663-amino-acid chain; its full sequence is Methionine--tRNA ligase (663 aa).

Residues 13 to 23 (PYTNGPCHLGH) carry the 'HIGH' region motif. Positions 144, 147, 156, and 160 each coordinate Zn(2+). A 'KMSKS' region motif is present at residues 326 to 330 (KFSKS). Lysine 329 provides a ligand contact to ATP. Positions 565 to 663 (EFGKMKLIVG…QAVEPGTPIR (99 aa)) constitute a tRNA-binding domain.

Belongs to the class-I aminoacyl-tRNA synthetase family. MetG type 1 subfamily. In terms of assembly, homodimer. Requires Zn(2+) as cofactor.

It is found in the cytoplasm. The catalysed reaction is tRNA(Met) + L-methionine + ATP = L-methionyl-tRNA(Met) + AMP + diphosphate. Functionally, is required not only for elongation of protein synthesis but also for the initiation of all mRNA translation through initiator tRNA(fMet) aminoacylation. The protein is Methionine--tRNA ligase of Methanosphaerula palustris (strain ATCC BAA-1556 / DSM 19958 / E1-9c).